Consider the following 153-residue polypeptide: ATP synthase subunit b' (153 aa).

The helical transmembrane segment at 20–40 (TLPLMAVQVVLLTFILNALFF) threads the bilayer.

This sequence belongs to the ATPase B chain family. F-type ATPases have 2 components, F(1) - the catalytic core - and F(0) - the membrane proton channel. F(1) has five subunits: alpha(3), beta(3), gamma(1), delta(1), epsilon(1). F(0) has four main subunits: a(1), b(1), b'(1) and c(10-14). The alpha and beta chains form an alternating ring which encloses part of the gamma chain. F(1) is attached to F(0) by a central stalk formed by the gamma and epsilon chains, while a peripheral stalk is formed by the delta, b and b' chains.

The protein localises to the cellular thylakoid membrane. F(1)F(0) ATP synthase produces ATP from ADP in the presence of a proton or sodium gradient. F-type ATPases consist of two structural domains, F(1) containing the extramembraneous catalytic core and F(0) containing the membrane proton channel, linked together by a central stalk and a peripheral stalk. During catalysis, ATP synthesis in the catalytic domain of F(1) is coupled via a rotary mechanism of the central stalk subunits to proton translocation. In terms of biological role, component of the F(0) channel, it forms part of the peripheral stalk, linking F(1) to F(0). The b'-subunit is a diverged and duplicated form of b found in plants and photosynthetic bacteria. This is ATP synthase subunit b' from Prochlorococcus marinus (strain NATL1A).